A 330-amino-acid chain; its full sequence is D-lactate dehydrogenase (330 aa).

NAD(+)-binding positions include 156-157 (RI), Asp-176, 206-207 (VP), 233-235 (AAR), and Asp-259. Arg-235 is an active-site residue. Glu-264 is a catalytic residue. The active-site Proton donor is His-296.

The protein belongs to the D-isomer specific 2-hydroxyacid dehydrogenase family.

The enzyme catalyses (R)-lactate + NAD(+) = pyruvate + NADH + H(+). The sequence is that of D-lactate dehydrogenase (ldhD) from Staphylococcus aureus (strain Mu50 / ATCC 700699).